Reading from the N-terminus, the 77-residue chain is Translation initiation factor IF-1, chloroplastic (77 aa).

An S1-like domain is found at 1–71 (MKEQKWIHEG…TRGRIIYRLR (71 aa)).

The protein belongs to the IF-1 family. As to quaternary structure, component of the 30S ribosomal translation pre-initiation complex which assembles on the 30S ribosome in the order IF-2 and IF-3, IF-1 and N-formylmethionyl-tRNA(fMet); mRNA recruitment can occur at any time during PIC assembly.

It localises to the plastid. The protein localises to the chloroplast. In terms of biological role, one of the essential components for the initiation of protein synthesis. Stabilizes the binding of IF-2 and IF-3 on the 30S subunit to which N-formylmethionyl-tRNA(fMet) subsequently binds. Helps modulate mRNA selection, yielding the 30S pre-initiation complex (PIC). Upon addition of the 50S ribosomal subunit IF-1, IF-2 and IF-3 are released leaving the mature 70S translation initiation complex. This chain is Translation initiation factor IF-1, chloroplastic, found in Brexia madagascariensis.